The following is a 676-amino-acid chain: UvrABC system protein C (676 aa).

In terms of domain architecture, GIY-YIG spans 16 to 95 (VEPGVYRFRD…IKEFDPRFNI (80 aa)). The UVR domain maps to 208-243 (DRLVRDLERKMTAAAEDLDFERAARLRDDIGALRRA).

Belongs to the UvrC family. As to quaternary structure, interacts with UvrB in an incision complex.

The protein resides in the cytoplasm. The UvrABC repair system catalyzes the recognition and processing of DNA lesions. UvrC both incises the 5' and 3' sides of the lesion. The N-terminal half is responsible for the 3' incision and the C-terminal half is responsible for the 5' incision. The sequence is that of UvrABC system protein C from Mycobacterium sp. (strain JLS).